Here is a 303-residue protein sequence, read N- to C-terminus: Bifunctional protein FolD (303 aa).

NADP(+) contacts are provided by residues 175–177 (GVS) and I243.

It belongs to the tetrahydrofolate dehydrogenase/cyclohydrolase family. Homodimer.

The enzyme catalyses (6R)-5,10-methylene-5,6,7,8-tetrahydrofolate + NADP(+) = (6R)-5,10-methenyltetrahydrofolate + NADPH. It catalyses the reaction (6R)-5,10-methenyltetrahydrofolate + H2O = (6R)-10-formyltetrahydrofolate + H(+). It functions in the pathway one-carbon metabolism; tetrahydrofolate interconversion. In terms of biological role, catalyzes the oxidation of 5,10-methylenetetrahydrofolate to 5,10-methenyltetrahydrofolate and then the hydrolysis of 5,10-methenyltetrahydrofolate to 10-formyltetrahydrofolate. The protein is Bifunctional protein FolD of Xanthomonas oryzae pv. oryzae (strain PXO99A).